A 475-amino-acid chain; its full sequence is Ribulose bisphosphate carboxylase large chain (475 aa).

Positions 1–2 (MS) are excised as a propeptide. Position 3 is an N-acetylproline (P3). Residue K14 is modified to N6,N6,N6-trimethyllysine. Residues N123 and T173 each contribute to the substrate site. The active-site Proton acceptor is K175. K177 contributes to the substrate binding site. Mg(2+) contacts are provided by K201, D203, and E204. K201 is modified (N6-carboxylysine). H294 (proton acceptor) is an active-site residue. Substrate contacts are provided by R295, H327, and S379.

It belongs to the RuBisCO large chain family. Type I subfamily. In terms of assembly, heterohexadecamer of 8 large chains and 8 small chains; disulfide-linked. The disulfide link is formed within the large subunit homodimers. It depends on Mg(2+) as a cofactor. The disulfide bond which can form in the large chain dimeric partners within the hexadecamer appears to be associated with oxidative stress and protein turnover.

The protein localises to the plastid. The protein resides in the chloroplast. It catalyses the reaction 2 (2R)-3-phosphoglycerate + 2 H(+) = D-ribulose 1,5-bisphosphate + CO2 + H2O. The catalysed reaction is D-ribulose 1,5-bisphosphate + O2 = 2-phosphoglycolate + (2R)-3-phosphoglycerate + 2 H(+). In terms of biological role, ruBisCO catalyzes two reactions: the carboxylation of D-ribulose 1,5-bisphosphate, the primary event in carbon dioxide fixation, as well as the oxidative fragmentation of the pentose substrate in the photorespiration process. Both reactions occur simultaneously and in competition at the same active site. The protein is Ribulose bisphosphate carboxylase large chain of Pinus thunbergii (Japanese black pine).